A 247-amino-acid polypeptide reads, in one-letter code: LHFPL tetraspan subfamily member 4 protein (247 aa).

4 helical membrane-spanning segments follow: residues 22-42 (IGVL…VVFI), 97-117 (FFVL…ALFF), 127-147 (ICAW…MIFP), and 178-198 (ILAI…FVLG).

It belongs to the LHFP family. In terms of assembly, interacts with GABA(A) receptor subunits. Interacts with GABRB3. Interacts with GABRA2. Interacts with GABRG2. Identified in a complex of 720 kDa composed of LHFPL4, NLGN2, GABRA1, GABRB2, GABRG2 and GABRB3. Interacts with GABRA1. Interacts with NLGN2; leading to mutual regulation of protein level and synaptic clustering.

It localises to the cell projection. It is found in the dendrite. Its subcellular location is the postsynaptic cell membrane. In terms of biological role, plays a role in the regulation of inhibitory synapse formation and function by being involved in maintening gamma-aminobutyric acid receptors (GABAARs) clustering and their associated scaffold proteins at inhibitory synaptic sites. Acts in concert with NLGN2 to recruit or stabilize GABAARs. The polypeptide is LHFPL tetraspan subfamily member 4 protein (Bos taurus (Bovine)).